The primary structure comprises 283 residues: Thymidylate synthase (283 aa).

DUMP is bound at residue Arg-22. The Nucleophile role is filled by Cys-160. DUMP-binding positions include 180–183, Asn-191, and 221–223; these read RSCD and HIY. (6R)-5,10-methylene-5,6,7,8-tetrahydrofolate is bound at residue Asp-183. Residue Ser-282 participates in (6R)-5,10-methylene-5,6,7,8-tetrahydrofolate binding.

It belongs to the thymidylate synthase family. Bacterial-type ThyA subfamily. As to quaternary structure, homodimer.

The protein resides in the cytoplasm. It carries out the reaction dUMP + (6R)-5,10-methylene-5,6,7,8-tetrahydrofolate = 7,8-dihydrofolate + dTMP. It participates in pyrimidine metabolism; dTTP biosynthesis. Its function is as follows. Catalyzes the reductive methylation of 2'-deoxyuridine-5'-monophosphate (dUMP) to 2'-deoxythymidine-5'-monophosphate (dTMP) while utilizing 5,10-methylenetetrahydrofolate (mTHF) as the methyl donor and reductant in the reaction, yielding dihydrofolate (DHF) as a by-product. This enzymatic reaction provides an intracellular de novo source of dTMP, an essential precursor for DNA biosynthesis. This chain is Thymidylate synthase, found in Mannheimia succiniciproducens (strain KCTC 0769BP / MBEL55E).